Here is a 141-residue protein sequence, read N- to C-terminus: Venom protein family 1 protein 1 (141 aa).

The signal sequence occupies residues methionine 1–glycine 17. A disulfide bridge links cysteine 62 with cysteine 139.

Belongs to the insect vpf1 family. In terms of tissue distribution, expressed by the venom gland (posterior main gland) (at protein level).

It is found in the secreted. The protein is Venom protein family 1 protein 1 of Platymeris rhadamanthus (Red spot assassin bug).